Here is a 1363-residue protein sequence, read N- to C-terminus: DNA-directed RNA polymerase subunit beta (1363 aa).

This sequence belongs to the RNA polymerase beta chain family. As to quaternary structure, the RNAP catalytic core consists of 2 alpha, 1 beta, 1 beta' and 1 omega subunit. When a sigma factor is associated with the core the holoenzyme is formed, which can initiate transcription.

The catalysed reaction is RNA(n) + a ribonucleoside 5'-triphosphate = RNA(n+1) + diphosphate. In terms of biological role, DNA-dependent RNA polymerase catalyzes the transcription of DNA into RNA using the four ribonucleoside triphosphates as substrates. This Syntrophus aciditrophicus (strain SB) protein is DNA-directed RNA polymerase subunit beta.